The primary structure comprises 161 residues: DNA-binding protein inhibitor ID-4 (161 aa).

Residues 52–104 (AAEAAADEPALCLQCDMNDCYSRLRRLVPTIPPNKKVSKVEILPHVIDYILDL) enclose the bHLH domain. A disordered region spans residues 116 to 161 (RQPPPPAPPHHPAGTCPAAPPRTPLTALNTDPAGAVNKQGDSILCR). The span at 117-126 (QPPPPAPPHH) shows a compositional bias: pro residues.

In terms of assembly, heterodimer with other HLH proteins.

It is found in the nucleus. Its function is as follows. Transcriptional regulator (lacking a basic DNA binding domain) which negatively regulates the basic helix-loop-helix (bHLH) transcription factors by forming heterodimers and inhibiting their DNA binding and transcriptional activity. Implicated in regulating a variety of cellular processes, including cellular growth, senescence, differentiation, apoptosis, angiogenesis, and neoplastic transformation. This Sus scrofa (Pig) protein is DNA-binding protein inhibitor ID-4 (ID4).